The sequence spans 130 residues: Ribonuclease pancreatic (130 aa).

Positions 1 to 6 (VQPSLG) are cleaved as a signal peptide. Substrate-binding residues include K13 and R16. The active-site Proton acceptor is the H18. Intrachain disulfides connect C32–C90, C46–C101, C64–C116, and C71–C78. N40 carries an N-linked (GlcNAc...) asparagine glycan. Substrate is bound by residues 47–51 (KPVNT), K72, and R91. The active-site Proton donor is the H125.

Belongs to the pancreatic ribonuclease family. Monomer. Interacts with and forms tight 1:1 complexes with RNH1. Dimerization of two such complexes may occur. Interaction with RNH1 inhibits this protein. Pancreas.

It localises to the secreted. The enzyme catalyses an [RNA] containing cytidine + H2O = an [RNA]-3'-cytidine-3'-phosphate + a 5'-hydroxy-ribonucleotide-3'-[RNA].. It carries out the reaction an [RNA] containing uridine + H2O = an [RNA]-3'-uridine-3'-phosphate + a 5'-hydroxy-ribonucleotide-3'-[RNA].. Functionally, endonuclease that catalyzes the cleavage of RNA on the 3' side of pyrimidine nucleotides. Acts on single-stranded and double-stranded RNA. The protein is Ribonuclease pancreatic (RNASE1) of Cricetulus griseus (Chinese hamster).